Reading from the N-terminus, the 210-residue chain is uncharacterized protein (210 aa).

This is an uncharacterized protein from Escherichia coli (strain K12).